Here is a 373-residue protein sequence, read N- to C-terminus: 5-amino-6-(5-phospho-D-ribitylamino)uracil phosphatase, chloroplastic (373 aa).

Belongs to the HAD-like hydrolase superfamily. DOG/GPP family. In terms of assembly, homodimer. Requires Mg(2+) as cofactor.

Its subcellular location is the plastid. The protein resides in the chloroplast. The enzyme catalyses 5-amino-6-(5-phospho-D-ribitylamino)uracil + H2O = 5-amino-6-(D-ribitylamino)uracil + phosphate. Catalyzes the dephosphorylation of 5-amino-6-(5-phospho-D-ribitylamino)uracil, also known as ARPP, but has no activity toward flavin mononucleotide (FMN). This is 5-amino-6-(5-phospho-D-ribitylamino)uracil phosphatase, chloroplastic from Arabidopsis thaliana (Mouse-ear cress).